We begin with the raw amino-acid sequence, 346 residues long: Holliday junction branch migration complex subunit RuvB (346 aa).

The tract at residues Met-1 to Tyr-182 is large ATPase domain (RuvB-L). Residues Leu-21, Arg-22, Gly-63, Lys-66, Thr-67, Thr-68, Glu-129 to Phe-131, Arg-172, Tyr-182, and Arg-219 contribute to the ATP site. Residue Thr-67 coordinates Mg(2+). The interval Thr-183–Leu-253 is small ATPAse domain (RuvB-S). The head domain (RuvB-H) stretch occupies residues Asn-256 to Asn-346. Positions 292, 311, and 316 each coordinate DNA.

Belongs to the RuvB family. Homohexamer. Forms an RuvA(8)-RuvB(12)-Holliday junction (HJ) complex. HJ DNA is sandwiched between 2 RuvA tetramers; dsDNA enters through RuvA and exits via RuvB. An RuvB hexamer assembles on each DNA strand where it exits the tetramer. Each RuvB hexamer is contacted by two RuvA subunits (via domain III) on 2 adjacent RuvB subunits; this complex drives branch migration. In the full resolvosome a probable DNA-RuvA(4)-RuvB(12)-RuvC(2) complex forms which resolves the HJ.

It is found in the cytoplasm. It catalyses the reaction ATP + H2O = ADP + phosphate + H(+). Functionally, the RuvA-RuvB-RuvC complex processes Holliday junction (HJ) DNA during genetic recombination and DNA repair, while the RuvA-RuvB complex plays an important role in the rescue of blocked DNA replication forks via replication fork reversal (RFR). RuvA specifically binds to HJ cruciform DNA, conferring on it an open structure. The RuvB hexamer acts as an ATP-dependent pump, pulling dsDNA into and through the RuvAB complex. RuvB forms 2 homohexamers on either side of HJ DNA bound by 1 or 2 RuvA tetramers; 4 subunits per hexamer contact DNA at a time. Coordinated motions by a converter formed by DNA-disengaged RuvB subunits stimulates ATP hydrolysis and nucleotide exchange. Immobilization of the converter enables RuvB to convert the ATP-contained energy into a lever motion, pulling 2 nucleotides of DNA out of the RuvA tetramer per ATP hydrolyzed, thus driving DNA branch migration. The RuvB motors rotate together with the DNA substrate, which together with the progressing nucleotide cycle form the mechanistic basis for DNA recombination by continuous HJ branch migration. Branch migration allows RuvC to scan DNA until it finds its consensus sequence, where it cleaves and resolves cruciform DNA. The polypeptide is Holliday junction branch migration complex subunit RuvB (Rhizobium leguminosarum bv. trifolii (strain WSM2304)).